A 638-amino-acid chain; its full sequence is Threonine--tRNA ligase (638 aa).

The TGS domain occupies 1 to 61 (MPEITLPDGS…DNDSKVVIIT (61 aa)). The interval 242-533 (DHRKLGKKHS…LIEQYEAKFP (292 aa)) is catalytic. The Zn(2+) site is built by C333, H384, and H510.

Belongs to the class-II aminoacyl-tRNA synthetase family. As to quaternary structure, homodimer. Zn(2+) serves as cofactor.

It localises to the cytoplasm. The enzyme catalyses tRNA(Thr) + L-threonine + ATP = L-threonyl-tRNA(Thr) + AMP + diphosphate + H(+). Its function is as follows. Catalyzes the attachment of threonine to tRNA(Thr) in a two-step reaction: L-threonine is first activated by ATP to form Thr-AMP and then transferred to the acceptor end of tRNA(Thr). Also edits incorrectly charged L-seryl-tRNA(Thr). This chain is Threonine--tRNA ligase, found in Prochlorococcus marinus subsp. pastoris (strain CCMP1986 / NIES-2087 / MED4).